The following is a 177-amino-acid chain: PLAC8-like protein 1 (177 aa).

It belongs to the cornifelin family.

This Mus musculus (Mouse) protein is PLAC8-like protein 1 (Plac8l1).